Reading from the N-terminus, the 72-residue chain is Translation initiation factor IF-1 (72 aa).

One can recognise an S1-like domain in the interval 1-72; the sequence is MAKEDCIEME…SKGRIIYRAR (72 aa).

It belongs to the IF-1 family. As to quaternary structure, component of the 30S ribosomal translation pre-initiation complex which assembles on the 30S ribosome in the order IF-2 and IF-3, IF-1 and N-formylmethionyl-tRNA(fMet); mRNA recruitment can occur at any time during PIC assembly.

Its subcellular location is the cytoplasm. In terms of biological role, one of the essential components for the initiation of protein synthesis. Stabilizes the binding of IF-2 and IF-3 on the 30S subunit to which N-formylmethionyl-tRNA(fMet) subsequently binds. Helps modulate mRNA selection, yielding the 30S pre-initiation complex (PIC). Upon addition of the 50S ribosomal subunit IF-1, IF-2 and IF-3 are released leaving the mature 70S translation initiation complex. The polypeptide is Translation initiation factor IF-1 (Pseudoalteromonas atlantica (strain T6c / ATCC BAA-1087)).